The sequence spans 428 residues: Probable mitochondrial adenine nucleotide transporter BTL3 (428 aa).

Solcar repeat units follow at residues 129-212, 222-307, and 336-421; these read LNTT…YRGQ, TTNF…LKSA, and LGPM…MKVV. The next 6 membrane-spanning stretches (helical) occupy residues 132–152, 187–207, 228–248, 283–303, 342–362, and 390–410; these read TKHL…IAPL, GNLV…YAYD, FVAG…LDTI, LVPS…VYDI, LLYG…FEVV, and VPAL…SAAI.

This sequence belongs to the mitochondrial carrier (TC 2.A.29) family.

The protein resides in the mitochondrion inner membrane. Functionally, probable mitochondrial adenylate carrier that catalyzes the transport of ATP, ADP and AMP. The protein is Probable mitochondrial adenine nucleotide transporter BTL3 of Arabidopsis thaliana (Mouse-ear cress).